Reading from the N-terminus, the 304-residue chain is Small ribosomal subunit biogenesis GTPase RsgA (304 aa).

The CP-type G domain maps to 78 to 237 (VSFLTRPPVA…VADTPGFNRP (160 aa)). GTP is bound by residues 127–130 (TKTD) and 179–187 (GPSGVGKSS). Zn(2+) is bound by residues C262, C267, H269, and C275.

It belongs to the TRAFAC class YlqF/YawG GTPase family. RsgA subfamily. Monomer. Associates with 30S ribosomal subunit, binds 16S rRNA. It depends on Zn(2+) as a cofactor.

It localises to the cytoplasm. In terms of biological role, one of several proteins that assist in the late maturation steps of the functional core of the 30S ribosomal subunit. Helps release RbfA from mature subunits. May play a role in the assembly of ribosomal proteins into the subunit. Circularly permuted GTPase that catalyzes slow GTP hydrolysis, GTPase activity is stimulated by the 30S ribosomal subunit. The polypeptide is Small ribosomal subunit biogenesis GTPase RsgA (Synechococcus sp. (strain CC9311)).